The sequence spans 582 residues: 2-succinyl-5-enolpyruvyl-6-hydroxy-3-cyclohexene-1-carboxylate synthase (582 aa).

It belongs to the TPP enzyme family. MenD subfamily. Homodimer. The cofactor is Mg(2+). It depends on Mn(2+) as a cofactor. Requires thiamine diphosphate as cofactor.

It catalyses the reaction isochorismate + 2-oxoglutarate + H(+) = 5-enolpyruvoyl-6-hydroxy-2-succinyl-cyclohex-3-ene-1-carboxylate + CO2. The protein operates within quinol/quinone metabolism; 1,4-dihydroxy-2-naphthoate biosynthesis; 1,4-dihydroxy-2-naphthoate from chorismate: step 2/7. It functions in the pathway cofactor biosynthesis; phylloquinone biosynthesis. Its function is as follows. Catalyzes the thiamine diphosphate-dependent decarboxylation of 2-oxoglutarate and the subsequent addition of the resulting succinic semialdehyde-thiamine pyrophosphate anion to isochorismate to yield 2-succinyl-5-enolpyruvyl-6-hydroxy-3-cyclohexene-1-carboxylate (SEPHCHC). The chain is 2-succinyl-5-enolpyruvyl-6-hydroxy-3-cyclohexene-1-carboxylate synthase from Prochlorococcus marinus (strain MIT 9313).